We begin with the raw amino-acid sequence, 666 residues long: DNA ligase (666 aa).

Residues 31–35 (DKEFD), 80–81 (SL), and E110 each bind NAD(+). K112 functions as the N6-AMP-lysine intermediate in the catalytic mechanism. 4 residues coordinate NAD(+): R133, E170, K285, and K309. The Zn(2+) site is built by C404, C407, C422, and C428. Positions 588–666 (GYTDKLAGQS…SEDEFLKLIS (79 aa)) constitute a BRCT domain.

The protein belongs to the NAD-dependent DNA ligase family. LigA subfamily. Requires Mg(2+) as cofactor. Mn(2+) is required as a cofactor.

The catalysed reaction is NAD(+) + (deoxyribonucleotide)n-3'-hydroxyl + 5'-phospho-(deoxyribonucleotide)m = (deoxyribonucleotide)n+m + AMP + beta-nicotinamide D-nucleotide.. In terms of biological role, DNA ligase that catalyzes the formation of phosphodiester linkages between 5'-phosphoryl and 3'-hydroxyl groups in double-stranded DNA using NAD as a coenzyme and as the energy source for the reaction. It is essential for DNA replication and repair of damaged DNA. This is DNA ligase from Bacteroides thetaiotaomicron (strain ATCC 29148 / DSM 2079 / JCM 5827 / CCUG 10774 / NCTC 10582 / VPI-5482 / E50).